The primary structure comprises 468 residues: GDNF family receptor alpha-1 (468 aa).

The N-terminal stretch at 1–24 (MFLATLYFVLPLLDLLMSAEVSGG) is a signal peptide. 3 repeat units span residues 25 to 113 (DRLD…LQGN), 150 to 238 (KGNN…YEER), and 239 to 342 (ERPN…KNAI). The cysteines at positions 36 and 42 are disulfide-linked. N-linked (GlcNAc...) asparagine glycosylation occurs at Asn-59. Cystine bridges form between Cys-154–Cys-214, Cys-161–Cys-167, Cys-178–Cys-192, Cys-187–Cys-233, Cys-216–Cys-221, Cys-243–Cys-313, Cys-250–Cys-256, Cys-267–Cys-285, Cys-277–Cys-337, and Cys-315–Cys-325. Residues Asn-347 and Asn-406 are each glycosylated (N-linked (GlcNAc...) asparagine). Ser-430 carries GPI-anchor amidated serine lipidation. Positions 431-468 (HITTKSMAAPPSCGLSSLPVMVFTALAALLSVSLAETS) are cleaved as a propeptide — removed in mature form.

This sequence belongs to the GDNFR family. Interacts with GDNF ligand and RET: forms a 2:2:2 ternary complex composed of GDNF ligand, GFRA1 and RET receptor. Interacts with SORL1, either alone or in complex with GDNF. Interaction between SORL1 and GFRA1 leads to GFRA1 internalization, but not degradation. As to expression, expressed in the brain, in hippocampal neurons (at protein level). Isoform 1 and isoform 2 are expressed in heart, brain, lung, liver, kidney and testis.

The protein resides in the cell membrane. Its subcellular location is the golgi apparatus. It is found in the trans-Golgi network. It localises to the endosome. The protein localises to the multivesicular body. Its function is as follows. Coreceptor for GDNF, a neurotrophic factor that enhances survival and morphological differentiation of dopaminergic neurons and increases their high-affinity dopamine uptake. GDNF-binding leads to autophosphorylation and activation of the RET receptor. This Mus musculus (Mouse) protein is GDNF family receptor alpha-1 (Gfra1).